The primary structure comprises 336 residues: tRNA N6-adenosine threonylcarbamoyltransferase (336 aa).

Positions 114 and 118 each coordinate Fe cation. Residues 136 to 140 (LVSGG), D169, G182, D186, and N275 each bind substrate. Fe cation is bound at residue D301.

The protein belongs to the KAE1 / TsaD family. The cofactor is Fe(2+).

Its subcellular location is the cytoplasm. The enzyme catalyses L-threonylcarbamoyladenylate + adenosine(37) in tRNA = N(6)-L-threonylcarbamoyladenosine(37) in tRNA + AMP + H(+). In terms of biological role, required for the formation of a threonylcarbamoyl group on adenosine at position 37 (t(6)A37) in tRNAs that read codons beginning with adenine. Is involved in the transfer of the threonylcarbamoyl moiety of threonylcarbamoyl-AMP (TC-AMP) to the N6 group of A37, together with TsaE and TsaB. TsaD likely plays a direct catalytic role in this reaction. The chain is tRNA N6-adenosine threonylcarbamoyltransferase from Streptococcus pneumoniae serotype 4 (strain ATCC BAA-334 / TIGR4).